The following is a 153-amino-acid chain: Transcriptional repressor NrdR 2 (153 aa).

A zinc finger spans residues 3-34 (CPFCGQDDTQVKDSRPTDDNAAIRRRRACPGC). The region spanning 49-139 (LVVVKKDGSR…VYRNFREAKD (91 aa)) is the ATP-cone domain.

It belongs to the NrdR family. It depends on Zn(2+) as a cofactor.

Its function is as follows. Negatively regulates transcription of bacterial ribonucleotide reductase nrd genes and operons by binding to NrdR-boxes. The sequence is that of Transcriptional repressor NrdR 2 from Paramagnetospirillum magneticum (strain ATCC 700264 / AMB-1) (Magnetospirillum magneticum).